Here is a 100-residue protein sequence, read N- to C-terminus: MTRRCDITGKSVLSGNNVSHANNKSRRRFLPNLQDSALQSDALGHSVKLRVTPRGLATIEQKGGLDAFLLDTPNRKLTDEARTLKRRVAKAAARREAKSA.

Positions 1–25 (MTRRCDITGKSVLSGNNVSHANNKS) are disordered. Residues 11-22 (SVLSGNNVSHAN) show a composition bias toward polar residues.

It belongs to the bacterial ribosomal protein bL28 family.

The protein is Large ribosomal subunit protein bL28 of Acidiphilium cryptum (strain JF-5).